An 89-amino-acid polypeptide reads, in one-letter code: Small ribosomal subunit protein uS14A (89 aa).

Belongs to the universal ribosomal protein uS14 family. In terms of assembly, part of the 30S ribosomal subunit. Contacts proteins S3 and S10.

Its function is as follows. Binds 16S rRNA, required for the assembly of 30S particles and may also be responsible for determining the conformation of the 16S rRNA at the A site. In Oceanobacillus iheyensis (strain DSM 14371 / CIP 107618 / JCM 11309 / KCTC 3954 / HTE831), this protein is Small ribosomal subunit protein uS14A.